A 160-amino-acid chain; its full sequence is Cytochrome b6-f complex subunit 4 (160 aa).

3 consecutive transmembrane segments (helical) span residues 36-56 (LLYI…GLSV), 95-115 (LLGV…PFIE), and 131-151 (TVFL…TFPI).

Belongs to the cytochrome b family. PetD subfamily. As to quaternary structure, the 4 large subunits of the cytochrome b6-f complex are cytochrome b6, subunit IV (17 kDa polypeptide, petD), cytochrome f and the Rieske protein, while the 4 small subunits are petG, petL, petM and petN. The complex functions as a dimer.

It is found in the plastid. Its subcellular location is the chloroplast thylakoid membrane. Functionally, component of the cytochrome b6-f complex, which mediates electron transfer between photosystem II (PSII) and photosystem I (PSI), cyclic electron flow around PSI, and state transitions. This chain is Cytochrome b6-f complex subunit 4, found in Stigeoclonium helveticum (Green alga).